Here is a 254-residue protein sequence, read N- to C-terminus: UPF0246 protein BDI_1226 (254 aa).

The protein belongs to the UPF0246 family.

The sequence is that of UPF0246 protein BDI_1226 from Parabacteroides distasonis (strain ATCC 8503 / DSM 20701 / CIP 104284 / JCM 5825 / NCTC 11152).